We begin with the raw amino-acid sequence, 315 residues long: Ribose-phosphate pyrophosphokinase (315 aa).

ATP contacts are provided by residues 37 to 39 (DGE) and 96 to 97 (RQ). The Mg(2+) site is built by His-131 and Asp-170. Lys-194 is a catalytic residue. D-ribose 5-phosphate is bound by residues Arg-196, Asp-220, and 224–228 (DTGGT).

Belongs to the ribose-phosphate pyrophosphokinase family. Class I subfamily. Homohexamer. Mg(2+) is required as a cofactor.

It localises to the cytoplasm. The catalysed reaction is D-ribose 5-phosphate + ATP = 5-phospho-alpha-D-ribose 1-diphosphate + AMP + H(+). It functions in the pathway metabolic intermediate biosynthesis; 5-phospho-alpha-D-ribose 1-diphosphate biosynthesis; 5-phospho-alpha-D-ribose 1-diphosphate from D-ribose 5-phosphate (route I): step 1/1. In terms of biological role, involved in the biosynthesis of the central metabolite phospho-alpha-D-ribosyl-1-pyrophosphate (PRPP) via the transfer of pyrophosphoryl group from ATP to 1-hydroxyl of ribose-5-phosphate (Rib-5-P). The sequence is that of Ribose-phosphate pyrophosphokinase from Yersinia pestis.